A 474-amino-acid polypeptide reads, in one-letter code: MAATHPKAPTAQRLRQGWSAFWDYETPKVIVVRNRPLGVVYRAVQLLILLYFVWYVFIVQKSYQDSETGPESSIITKVKGITQSEHKVWDVEEYVKPPEGGSVFSIITRIEVTPFQTLGACPESIRVPNTTCHLDADCTAGELDMLGNGLRTGRCVPYYHGEAKTCEVSGWCPVEDGAAVSHFLGKMAPNFTILIKNSIHYPKFQFSKGNIAHRDMTYLRRCTFDQGFDPYCPIFRLGFIVEQAGENFTELAHRGGVIGVIINWDCDLDLPSSHCNPKYSFRRLDPKHVPASSGYNFRFAKYYRVNSTTTRTLIKAYGIRIDVIVHGQAGKFSLIPTIINLATALTSIGVGSFLCDWILLTFMNKNKVYSHKKFDKVCAPSRPSSSWPVTLALILGQAPPPPRHCSSPWHLAHQAVGPQGAEQAKLLGLQNPTPYRLSEQIADTPDRCVGQGLPSSESPLQDSTPTDPKGLAQL.

The Cytoplasmic portion of the chain corresponds to 1 to 42 (MAATHPKAPTAQRLRQGWSAFWDYETPKVIVVRNRPLGVVYR). A helical transmembrane segment spans residues 43–60 (AVQLLILLYFVWYVFIVQ). Residues 61–333 (KSYQDSETGP…IVHGQAGKFS (273 aa)) are Extracellular-facing. The ATP site is built by lysine 77 and lysine 79. Cystine bridges form between cysteine 121–cysteine 172, cysteine 132–cysteine 155, and cysteine 138–cysteine 166. N-linked (GlcNAc...) asparagine glycosylation occurs at asparagine 129. N-linked (GlcNAc...) asparagine glycosylation is present at asparagine 190. Threonine 192 contacts ATP. The cysteines at positions 222 and 232 are disulfide-linked. N-linked (GlcNAc...) asparagine glycosylation is present at asparagine 247. Cysteine 266 and cysteine 275 are disulfide-bonded. ATP contacts are provided by serine 292, asparagine 296, and arginine 298. N-linked (GlcNAc...) asparagine glycosylation is present at asparagine 306. Lysine 315 lines the ATP pocket. A pore-forming motif region spans residues 316 to 329 (AYGIRIDVIVHGQA). A helical transmembrane segment spans residues 334 to 354 (LIPTIINLATALTSIGVGSFL). The Cytoplasmic portion of the chain corresponds to 355–474 (CDWILLTFMN…PTDPKGLAQL (120 aa)). Positions 445–474 (PDRCVGQGLPSSESPLQDSTPTDPKGLAQL) are disordered. The segment covering 453–466 (LPSSESPLQDSTPT) has biased composition (polar residues).

It belongs to the P2X receptor family. As to quaternary structure, homotrimer and heterotrimer; functional P2XRs are organized as homomeric and heteromeric trimers. Homotrimer. Forms heterodimer with P2RX1. Forms heterotrimer with P2RX6. Forms heterotrimer with P2RX3. In terms of tissue distribution, express in organ of Corti.

The protein localises to the cell membrane. The catalysed reaction is Ca(2+)(in) = Ca(2+)(out). It catalyses the reaction K(+)(in) = K(+)(out). The enzyme catalyses Na(+)(in) = Na(+)(out). With respect to regulation, fast activation by external ATP. Exhibits slow desensitization during prolonged ATP activation. Not sensitive to the ATP agonist:alpha/beta-methylene-ATP. ATP-gated nonselective transmembrane cation channel permeable to potassium, sodium and calcium. Activation by extracellular ATP induces a variety of cellular responses, such as excitatory postsynaptic responses in sensory neurons, neuromuscular junctions (NMJ) formation, hearing, perception of taste and peristalsis. In the inner ear, regulates sound transduction and auditory neurotransmission, outer hair cell electromotility, inner ear gap junctions, and K(+) recycling. Mediates synaptic transmission between neurons and from neurons to smooth muscle. The chain is P2X purinoceptor 2 (P2RX2) from Cavia porcellus (Guinea pig).